The sequence spans 730 residues: Probable palmitoyltransferase AKR2 (730 aa).

ANK repeat units lie at residues 32–62 (FVVE…DINK), 66–95 (DELP…NVNQ), 100–129 (ERAT…NPTL), 133–166 (QGLN…NVDI), 172–201 (NNRT…TVAL), and 205–234 (RGFN…NFYE). 4 helical membrane-spanning segments follow: residues 283–303 (LMIF…SLIL), 309–328 (IALS…KFVL), 344–364 (TPFF…IWVK), and 376–396 (AKDA…LKLV). One can recognise a DHHC domain in the interval 429–479 (NFCVETLERKPLRSKYSLFSGALVARFNHYCPWVYNDIGLKNHKLFMFFAF). Catalysis depends on C459, which acts as the S-palmitoyl cysteine intermediate. The next 2 membrane-spanning stretches (helical) occupy residues 473–493 (LFMF…WLCL) and 530–550 (TFFL…MLIV).

The protein belongs to the DHHC palmitoyltransferase family. AKR/ZDHHC17 subfamily.

It localises to the membrane. The catalysed reaction is L-cysteinyl-[protein] + hexadecanoyl-CoA = S-hexadecanoyl-L-cysteinyl-[protein] + CoA. This is Probable palmitoyltransferase AKR2 (AKR2) from Saccharomyces uvarum (strain ATCC 76518 / CBS 7001 / CLIB 283 / NBRC 10550 / MCYC 623 / NCYC 2669 / NRRL Y-11845) (Yeast).